The sequence spans 442 residues: tRNA-2-methylthio-N(6)-dimethylallyladenosine synthase (442 aa).

The MTTase N-terminal domain occupies 5–122; sequence KKVFIKTLGC…LPEMIKQKQK (118 aa). Cys14, Cys51, Cys85, Cys159, Cys163, and Cys166 together coordinate [4Fe-4S] cluster. One can recognise a Radical SAM core domain in the interval 145-378; sequence KAEGAKAYVS…DLLNSNAQII (234 aa). The region spanning 380–442 is the TRAM domain; that stretch reads RQMVGTNQRI…LPNSLRGELI (63 aa).

This sequence belongs to the methylthiotransferase family. MiaB subfamily. In terms of assembly, monomer. The cofactor is [4Fe-4S] cluster.

The protein localises to the cytoplasm. It carries out the reaction N(6)-dimethylallyladenosine(37) in tRNA + (sulfur carrier)-SH + AH2 + 2 S-adenosyl-L-methionine = 2-methylsulfanyl-N(6)-dimethylallyladenosine(37) in tRNA + (sulfur carrier)-H + 5'-deoxyadenosine + L-methionine + A + S-adenosyl-L-homocysteine + 2 H(+). Its function is as follows. Catalyzes the methylthiolation of N6-(dimethylallyl)adenosine (i(6)A), leading to the formation of 2-methylthio-N6-(dimethylallyl)adenosine (ms(2)i(6)A) at position 37 in tRNAs that read codons beginning with uridine. This chain is tRNA-2-methylthio-N(6)-dimethylallyladenosine synthase, found in Francisella tularensis subsp. holarctica (strain LVS).